We begin with the raw amino-acid sequence, 497 residues long: Glycerol kinase (497 aa).

ADP is bound at residue T12. Positions 12, 13, and 14 each coordinate ATP. T12 is a binding site for sn-glycerol 3-phosphate. An ADP-binding site is contributed by R16. The sn-glycerol 3-phosphate site is built by R82, E83, Y134, and D243. Glycerol-binding residues include R82, E83, Y134, D243, and Q244. The ADP site is built by T265 and G308. ATP-binding residues include T265, G308, Q312, and G409. ADP contacts are provided by G409 and N413.

The protein belongs to the FGGY kinase family.

It catalyses the reaction glycerol + ATP = sn-glycerol 3-phosphate + ADP + H(+). The protein operates within polyol metabolism; glycerol degradation via glycerol kinase pathway; sn-glycerol 3-phosphate from glycerol: step 1/1. With respect to regulation, inhibited by fructose 1,6-bisphosphate (FBP). Functionally, key enzyme in the regulation of glycerol uptake and metabolism. Catalyzes the phosphorylation of glycerol to yield sn-glycerol 3-phosphate. The sequence is that of Glycerol kinase from Nitratidesulfovibrio vulgaris (strain DSM 19637 / Miyazaki F) (Desulfovibrio vulgaris).